A 394-amino-acid chain; its full sequence is Elongation factor Tu (394 aa).

Residues 10-204 (KPHVNVGTIG…HLDSYIPEPE (195 aa)) form the tr-type G domain. The tract at residues 19–26 (GHVDHGKT) is G1. Residue 19 to 26 (GHVDHGKT) participates in GTP binding. T26 contributes to the Mg(2+) binding site. The interval 60–64 (GITIN) is G2. The tract at residues 81–84 (DCPG) is G3. GTP is bound by residues 81–85 (DCPGH) and 136–139 (NKCD). The G4 stretch occupies residues 136–139 (NKCD). Positions 174–176 (SAL) are G5.

The protein belongs to the TRAFAC class translation factor GTPase superfamily. Classic translation factor GTPase family. EF-Tu/EF-1A subfamily. As to quaternary structure, monomer.

It localises to the cytoplasm. The enzyme catalyses GTP + H2O = GDP + phosphate + H(+). GTP hydrolase that promotes the GTP-dependent binding of aminoacyl-tRNA to the A-site of ribosomes during protein biosynthesis. In Haemophilus ducreyi (strain 35000HP / ATCC 700724), this protein is Elongation factor Tu.